Reading from the N-terminus, the 338-residue chain is MQVYYDKDCDLSIIQGKKVAIIGYGSQGHAHANNLKDSGVDVCVGLRKGSGSWAKAENAGLAVKEVAEAVAGADVVMILTPDEFQAQLYKSEIEPNLKSGATLAFAHGFSIHYNQIVPRADLDVIMIAPKAPGHTVRSEFVKGGGIPDLIAIFQDASGSAKDLALSYASGVGGGRTGIIETTFKDETETDLFGEQAVLCGGAVELVKAGFETLVEAGYAPEMAYFECLHELKLIVDLMYEGGIANMNYSISNNAEYGEYVTGPEVINDQSRAAMRNALKRIQDGEYAKMFIAEGAHNYPSMTAYRRNNAAHPIEQVGEKLRSMMPWIASNKIVDKSKN.

Residues 1–181 (MQVYYDKDCD…GGGRTGIIET (181 aa)) enclose the KARI N-terminal Rossmann domain. NADP(+)-binding positions include 24-27 (YGSQ), arginine 47, serine 50, serine 52, and 82-85 (DEFQ). The active site involves histidine 107. Glycine 133 contributes to the NADP(+) binding site. A KARI C-terminal knotted domain is found at 182–327 (TFKDETETDL…EKLRSMMPWI (146 aa)). Aspartate 190, glutamate 194, glutamate 226, and glutamate 230 together coordinate Mg(2+). Residue serine 251 participates in substrate binding.

Belongs to the ketol-acid reductoisomerase family. Requires Mg(2+) as cofactor.

It catalyses the reaction (2R)-2,3-dihydroxy-3-methylbutanoate + NADP(+) = (2S)-2-acetolactate + NADPH + H(+). The catalysed reaction is (2R,3R)-2,3-dihydroxy-3-methylpentanoate + NADP(+) = (S)-2-ethyl-2-hydroxy-3-oxobutanoate + NADPH + H(+). Its pathway is amino-acid biosynthesis; L-isoleucine biosynthesis; L-isoleucine from 2-oxobutanoate: step 2/4. It functions in the pathway amino-acid biosynthesis; L-valine biosynthesis; L-valine from pyruvate: step 2/4. In terms of biological role, involved in the biosynthesis of branched-chain amino acids (BCAA). Catalyzes an alkyl-migration followed by a ketol-acid reduction of (S)-2-acetolactate (S2AL) to yield (R)-2,3-dihydroxy-isovalerate. In the isomerase reaction, S2AL is rearranged via a Mg-dependent methyl migration to produce 3-hydroxy-3-methyl-2-ketobutyrate (HMKB). In the reductase reaction, this 2-ketoacid undergoes a metal-dependent reduction by NADPH to yield (R)-2,3-dihydroxy-isovalerate. In Hahella chejuensis (strain KCTC 2396), this protein is Ketol-acid reductoisomerase (NADP(+)).